The primary structure comprises 580 residues: Tripeptidyl-peptidase sed5 (580 aa).

Residues 1 to 21 form a disordered region; it reads MYPLDGSARPHPPGTTRLNSV. The 387-residue stretch at 181–567 folds into the Peptidase S53 domain; sequence RAQRLIVAEL…RRTLEELRRI (387 aa). Asn236 carries N-linked (GlcNAc...) asparagine glycosylation. Residues Glu269, Asp273, and Ser479 each act as charge relay system in the active site. Asp523 and Ile524 together coordinate Ca(2+). Asn529 carries an N-linked (GlcNAc...) asparagine glycan. Ca(2+)-binding residues include Gly543, Gly545, and Asp547.

Requires Ca(2+) as cofactor.

The protein localises to the secreted. It localises to the extracellular space. The enzyme catalyses Release of an N-terminal tripeptide from a polypeptide.. In terms of biological role, secreted tripeptidyl-peptidase which degrades proteins at acidic pHs and is involved in virulence. This chain is Tripeptidyl-peptidase sed5 (sed5), found in Aspergillus fumigatus (strain ATCC MYA-4609 / CBS 101355 / FGSC A1100 / Af293) (Neosartorya fumigata).